The following is a 321-amino-acid chain: Acetyl-coenzyme A carboxylase carboxyl transferase subunit alpha (321 aa).

The CoA carboxyltransferase C-terminal domain occupies 39–293; sequence RLQQKSQTLA…RRALGDSLRQ (255 aa).

The protein belongs to the AccA family. As to quaternary structure, acetyl-CoA carboxylase is a heterohexamer composed of biotin carboxyl carrier protein (AccB), biotin carboxylase (AccC) and two subunits each of ACCase subunit alpha (AccA) and ACCase subunit beta (AccD).

Its subcellular location is the cytoplasm. It catalyses the reaction N(6)-carboxybiotinyl-L-lysyl-[protein] + acetyl-CoA = N(6)-biotinyl-L-lysyl-[protein] + malonyl-CoA. The protein operates within lipid metabolism; malonyl-CoA biosynthesis; malonyl-CoA from acetyl-CoA: step 1/1. Component of the acetyl coenzyme A carboxylase (ACC) complex. First, biotin carboxylase catalyzes the carboxylation of biotin on its carrier protein (BCCP) and then the CO(2) group is transferred by the carboxyltransferase to acetyl-CoA to form malonyl-CoA. In Bordetella avium (strain 197N), this protein is Acetyl-coenzyme A carboxylase carboxyl transferase subunit alpha.